The sequence spans 186 residues: Pyridoxal 5'-phosphate synthase subunit PdxT (186 aa).

47 to 49 (GES) contributes to the L-glutamine binding site. The Nucleophile role is filled by Cys-76. L-glutamine-binding positions include Arg-102 and 130 to 131 (IR). Catalysis depends on charge relay system residues His-166 and Glu-168.

The protein belongs to the glutaminase PdxT/SNO family. As to quaternary structure, in the presence of PdxS, forms a dodecamer of heterodimers. Only shows activity in the heterodimer.

The enzyme catalyses aldehydo-D-ribose 5-phosphate + D-glyceraldehyde 3-phosphate + L-glutamine = pyridoxal 5'-phosphate + L-glutamate + phosphate + 3 H2O + H(+). The catalysed reaction is L-glutamine + H2O = L-glutamate + NH4(+). It functions in the pathway cofactor biosynthesis; pyridoxal 5'-phosphate biosynthesis. Functionally, catalyzes the hydrolysis of glutamine to glutamate and ammonia as part of the biosynthesis of pyridoxal 5'-phosphate. The resulting ammonia molecule is channeled to the active site of PdxS. The chain is Pyridoxal 5'-phosphate synthase subunit PdxT from Staphylococcus epidermidis (strain ATCC 35984 / DSM 28319 / BCRC 17069 / CCUG 31568 / BM 3577 / RP62A).